Here is a 311-residue protein sequence, read N- to C-terminus: Methionyl-tRNA formyltransferase (311 aa).

Position 110 to 113 (110 to 113 (SLLP)) interacts with (6S)-5,6,7,8-tetrahydrofolate.

This sequence belongs to the Fmt family.

The catalysed reaction is L-methionyl-tRNA(fMet) + (6R)-10-formyltetrahydrofolate = N-formyl-L-methionyl-tRNA(fMet) + (6S)-5,6,7,8-tetrahydrofolate + H(+). Its function is as follows. Attaches a formyl group to the free amino group of methionyl-tRNA(fMet). The formyl group appears to play a dual role in the initiator identity of N-formylmethionyl-tRNA by promoting its recognition by IF2 and preventing the misappropriation of this tRNA by the elongation apparatus. This chain is Methionyl-tRNA formyltransferase, found in Streptococcus pyogenes serotype M2 (strain MGAS10270).